A 396-amino-acid chain; its full sequence is Calcium-responsive transactivator (396 aa).

Residues 1–148 (MSVAFASARP…TLPTTSMSIS (148 aa)) are N-terminal auto-inhibitory domain; necessary for interaction with SMARCA4/BRG1. An SH2-binding motif is present at residues 50 to 53 (YQQI). Disordered stretches follow at residues 72-162 (QSLL…SQGV), 192-280 (QAAT…GDYA), and 311-396 (SQQQ…NYQQ). Over residues 90-106 (LTQSGSSQGLHSQGSLS) the composition is skewed to low complexity. Polar residues-rich tracts occupy residues 107–122 (DAIS…LQGQ) and 128–147 (SHVS…SMSI). Positions 149-232 (GPGYSHAGPA…GSSMMGQRPM (84 aa)) are methionine-rich intra-molecular domain. 3 stretches are compositionally biased toward low complexity: residues 199–229 (SSAQ…MMGQ), 238–261 (SQQG…SHSQ), and 311–369 (SQQQ…YGSY). Positions 246-317 (YLGQEEYYGE…SQYSQQQAGY (72 aa)) are MFD domain. The tract at residues 334 to 396 (SQQSYPGQQQ…EQGQYGNYQQ (63 aa)) is necessary for nuclear localization. Positions 353–356 (SQYP) match the SH2-binding motif. Positions 371 to 379 (APQTAPSAQ) match the SH3-binding motif. Over residues 384-396 (YGYEQGQYGNYQQ) the composition is skewed to low complexity. The segment at 387–396 (EQGQYGNYQQ) is necessary for interaction with CREBBP and for the recruitment of CREBBP to the nuclear bodies. The SH2-binding motif lies at 391–394 (YGNY).

The protein belongs to the SS18 family. Homodimer. Dimerization may be necessary for its function in neuronal dendritic development. Interacts (via C-terminus) with CREBBP (via N-terminus), EP300 and SMARCA4/BRG1. Interacts with the nBAF complex. Association with CREBBP facilitates transcription while the association with SMARCA4/BRG1 suppresses CREST-mediated transcription in resting neurons. Ubiquitous; with lowest levels in spleen.

The protein localises to the nucleus. It localises to the chromosome. The protein resides in the centromere. Its subcellular location is the kinetochore. Transcriptional activator which is required for calcium-dependent dendritic growth and branching in cortical neurons. Recruits CREB-binding protein (CREBBP) to nuclear bodies. Component of the CREST-BRG1 complex, a multiprotein complex that regulates promoter activation by orchestrating a calcium-dependent release of a repressor complex and a recruitment of an activator complex. In resting neurons, transcription of the c-FOS promoter is inhibited by BRG1-dependent recruitment of a phospho-RB1-HDAC1 repressor complex. Upon calcium influx, RB1 is dephosphorylated by calcineurin, which leads to release of the repressor complex. At the same time, there is increased recruitment of CREBBP to the promoter by a CREST-dependent mechanism, which leads to transcriptional activation. The CREST-BRG1 complex also binds to the NR2B promoter, and activity-dependent induction of NR2B expression involves a release of HDAC1 and recruitment of CREBBP. In Homo sapiens (Human), this protein is Calcium-responsive transactivator (SS18L1).